Reading from the N-terminus, the 289-residue chain is Phosphatidylserine decarboxylase proenzyme (289 aa).

Active-site charge relay system; for autoendoproteolytic cleavage activity residues include Asp-92, His-149, and Ser-254. The active-site Schiff-base intermediate with substrate; via pyruvic acid; for decarboxylase activity is Ser-254. Ser-254 carries the post-translational modification Pyruvic acid (Ser); by autocatalysis.

This sequence belongs to the phosphatidylserine decarboxylase family. PSD-B subfamily. Prokaryotic type I sub-subfamily. Heterodimer of a large membrane-associated beta subunit and a small pyruvoyl-containing alpha subunit. Pyruvate is required as a cofactor. Post-translationally, is synthesized initially as an inactive proenzyme. Formation of the active enzyme involves a self-maturation process in which the active site pyruvoyl group is generated from an internal serine residue via an autocatalytic post-translational modification. Two non-identical subunits are generated from the proenzyme in this reaction, and the pyruvate is formed at the N-terminus of the alpha chain, which is derived from the carboxyl end of the proenzyme. The autoendoproteolytic cleavage occurs by a canonical serine protease mechanism, in which the side chain hydroxyl group of the serine supplies its oxygen atom to form the C-terminus of the beta chain, while the remainder of the serine residue undergoes an oxidative deamination to produce ammonia and the pyruvoyl prosthetic group on the alpha chain. During this reaction, the Ser that is part of the protease active site of the proenzyme becomes the pyruvoyl prosthetic group, which constitutes an essential element of the active site of the mature decarboxylase.

The protein localises to the cell membrane. It carries out the reaction a 1,2-diacyl-sn-glycero-3-phospho-L-serine + H(+) = a 1,2-diacyl-sn-glycero-3-phosphoethanolamine + CO2. Its pathway is phospholipid metabolism; phosphatidylethanolamine biosynthesis; phosphatidylethanolamine from CDP-diacylglycerol: step 2/2. Its function is as follows. Catalyzes the formation of phosphatidylethanolamine (PtdEtn) from phosphatidylserine (PtdSer). This Pseudomonas aeruginosa (strain UCBPP-PA14) protein is Phosphatidylserine decarboxylase proenzyme.